Here is a 220-residue protein sequence, read N- to C-terminus: uncharacterized protein (220 aa).

The disordered stretch occupies residues 194-220; that stretch reads DQSQQQATKSNSKTKKLKGNHGEKTKI. The segment covering 195-204 has biased composition (polar residues); the sequence is QSQQQATKSN.

This is an uncharacterized protein from Borreliella burgdorferi (strain ATCC 35210 / DSM 4680 / CIP 102532 / B31) (Borrelia burgdorferi).